The sequence spans 350 residues: Protein-glutamate methylesterase/protein-glutamine glutaminase (350 aa).

A Response regulatory domain is found at 5 to 122; sequence RVLCVDDSAL…REGMLAYSEL (118 aa). Asp56 is modified (4-aspartylphosphate). Residues 153-345 enclose the CheB-type methylesterase domain; that stretch reads LLSSEKLIAI…QRMLAQISAG (193 aa). Catalysis depends on residues Ser165, His191, and Asp287.

The protein belongs to the CheB family. In terms of processing, phosphorylated by CheA. Phosphorylation of the N-terminal regulatory domain activates the methylesterase activity.

It localises to the cytoplasm. It carries out the reaction [protein]-L-glutamate 5-O-methyl ester + H2O = L-glutamyl-[protein] + methanol + H(+). The catalysed reaction is L-glutaminyl-[protein] + H2O = L-glutamyl-[protein] + NH4(+). Functionally, involved in chemotaxis. Part of a chemotaxis signal transduction system that modulates chemotaxis in response to various stimuli. Catalyzes the demethylation of specific methylglutamate residues introduced into the chemoreceptors (methyl-accepting chemotaxis proteins or MCP) by CheR. Also mediates the irreversible deamidation of specific glutamine residues to glutamic acid. Does not interact with the C-terminal pentapeptide of the chemoreceptors. This Pectobacterium atrosepticum (strain SCRI 1043 / ATCC BAA-672) (Erwinia carotovora subsp. atroseptica) protein is Protein-glutamate methylesterase/protein-glutamine glutaminase.